A 117-amino-acid polypeptide reads, in one-letter code: MARRTRNRSEIIARRFVSRQQPTRTQPFVERWRWIIQGQVQGVGFRASCSRRALDMGLKGWVRNLQDGSVEVQAEGPPIALAELRAWCEKGPLGAQVKRVKPCQMPVRGDDWFEVRY.

The 87-residue stretch at 31–117 folds into the Acylphosphatase-like domain; it reads RWRWIIQGQV…RGDDWFEVRY (87 aa). Active-site residues include R46 and N64.

Belongs to the acylphosphatase family.

It catalyses the reaction an acyl phosphate + H2O = a carboxylate + phosphate + H(+). The sequence is that of Acylphosphatase (acyP) from Synechococcus sp. (strain CC9902).